Consider the following 228-residue polypeptide: Mediator of RNA polymerase II transcription subunit 7-B (228 aa).

The protein belongs to the Mediator complex subunit 7 family. Component of the Mediator complex.

Its subcellular location is the nucleus. Functionally, component of the Mediator complex, a coactivator involved in the regulated transcription of nearly all RNA polymerase II-dependent genes. Mediator functions as a bridge to convey information from gene-specific regulatory proteins to the basal RNA polymerase II transcription machinery. Mediator is recruited to promoters by direct interactions with regulatory proteins and serves as a scaffold for the assembly of a functional preinitiation complex with RNA polymerase II and the general transcription factors. In Xenopus laevis (African clawed frog), this protein is Mediator of RNA polymerase II transcription subunit 7-B (med7-b).